We begin with the raw amino-acid sequence, 329 residues long: GTPase Obg (329 aa).

An Obg domain is found at 2–160 (YNFKDSVSIT…LNVRLELFLV (159 aa)). The OBG-type G domain maps to 161–327 (ADIGLVGPPN…LIKEFFILAK (167 aa)). GTP-binding positions include 167–174 (GPPNAGKS), 192–196 (FTTKI), 213–216 (DIPG), 280–283 (NKLD), and 308–310 (SIY). The Mg(2+) site is built by serine 174 and threonine 194.

Belongs to the TRAFAC class OBG-HflX-like GTPase superfamily. OBG GTPase family. As to quaternary structure, monomer. Requires Mg(2+) as cofactor.

The protein resides in the cytoplasm. In terms of biological role, an essential GTPase which binds GTP, GDP and possibly (p)ppGpp with moderate affinity, with high nucleotide exchange rates and a fairly low GTP hydrolysis rate. Plays a role in control of the cell cycle, stress response, ribosome biogenesis and in those bacteria that undergo differentiation, in morphogenesis control. This Borrelia garinii subsp. bavariensis (strain ATCC BAA-2496 / DSM 23469 / PBi) (Borreliella bavariensis) protein is GTPase Obg.